We begin with the raw amino-acid sequence, 6713 residues long: Extracellular matrix-binding protein EbhA (6713 aa).

44 FIVAR domains span residues 1–58 (MGNL…VEQA), 126–184 (AMGQ…VTAA), 252–310 (AMKG…ITQA), 378–436 (QMGN…VEAA), 504–562 (AMAN…VENA), 630–688 (AMGT…INQI), 756–814 (AMGQ…VDRA), 882–940 (AMNS…VDNA), 1008–1066 (AMGA…INDM), 1134–1192 (AMTA…VNSA), 1260–1318 (AMKG…ITQA), 1386–1444 (AMHS…VEQA), 1512–1570 (AMGQ…VERA), 1638–1696 (AMTA…VTNA), 1764–1822 (AMKG…INQA), 1890–1948 (AMTN…VETA), 2142–2200 (AMNQ…INQK), 2268–2325 (AMGN…VQAA), 2393–2451 (AMGQ…VEAA), 2519–2577 (AMQR…VEQA), 2645–2703 (AMDQ…VTAA), 2771–2829 (AMNQ…VTQA), 2897–2955 (AMER…VEAA), 3023–3081 (AMGN…VEAA), 3149–3207 (AMDK…INQA), 3275–3333 (AMGN…VEQA), 3401–3459 (AMTQ…ITAA), 3527–3585 (AMTQ…IQQA), 3653–3711 (AMTN…VEQA), 3779–3837 (AMTQ…VAQA), 3905–3963 (AMGT…VTKA), 4031–4089 (AMGN…ITRA), 4157–4218 (AMDQ…ITNE), 4283–4341 (AMEL…VNGA), 4409–4467 (AMGN…VEQA), 4535–4592 (AMHG…INQV), 4660–4718 (LMDA…VSSA), 4786–4844 (AMKA…IDQA), 4912–4970 (AMEA…VEQL), 5038–5096 (AMQA…VEQL), 5164–5222 (AMET…VEQA), 5290–5344 (SMDQ…VDQA), 5412–5471 (AMDQ…VIKL), and 5666–5722 (AMET…INGA). A helical transmembrane segment spans residues 6518–6540 (VIKNAIGVVGISGLLASFWFFIA). Positions 6616–6713 (RRKEDEEDVE…KKKKSKKNKK (98 aa)) are disordered. 2 stretches are compositionally biased toward basic and acidic residues: residues 6631–6641 (TDEKVLKDNEH) and 6680–6690 (QKDNQSKDKKS). Over residues 6695–6713 (TSKKVAAKKKKKKSKKNKK) the composition is skewed to basic residues.

Its subcellular location is the cell membrane. The chain is Extracellular matrix-binding protein EbhA (ebhA) from Staphylococcus aureus (strain Mu3 / ATCC 700698).